We begin with the raw amino-acid sequence, 119 residues long: Large ribosomal subunit protein bL19 (119 aa).

This sequence belongs to the bacterial ribosomal protein bL19 family.

Functionally, this protein is located at the 30S-50S ribosomal subunit interface and may play a role in the structure and function of the aminoacyl-tRNA binding site. In Mycoplasma genitalium (strain ATCC 33530 / DSM 19775 / NCTC 10195 / G37) (Mycoplasmoides genitalium), this protein is Large ribosomal subunit protein bL19 (rplS).